A 685-amino-acid chain; its full sequence is Polyphosphate kinase (685 aa).

N45 lines the ATP pocket. 2 residues coordinate Mg(2+): R375 and R405. H435 (phosphohistidine intermediate) is an active-site residue. Residues Y468, R564, and H592 each contribute to the ATP site.

Belongs to the polyphosphate kinase 1 (PPK1) family. It depends on Mg(2+) as a cofactor. In terms of processing, an intermediate of this reaction is the autophosphorylated ppk in which a phosphate is covalently linked to a histidine residue through a N-P bond.

It carries out the reaction [phosphate](n) + ATP = [phosphate](n+1) + ADP. In terms of biological role, catalyzes the reversible transfer of the terminal phosphate of ATP to form a long-chain polyphosphate (polyP). The polypeptide is Polyphosphate kinase (Neisseria meningitidis serogroup B (strain ATCC BAA-335 / MC58)).